The primary structure comprises 86 residues: Kappa-theraphotoxin-Cg1c (86 aa).

The first 21 residues, 1–21 (MKVSVLITLAVLGVMFVWASA), serve as a signal peptide directing secretion. The propeptide occupies 22-50 (AELEERGSDHRDSPAWLKSMERIFQSEER). Intrachain disulfides connect Cys52-Cys66, Cys59-Cys71, and Cys65-Cys78.

It belongs to the neurotoxin 10 (Hwtx-1) family. 28 (Jztx-11) subfamily. As to expression, expressed by the venom gland.

The protein resides in the secreted. In terms of biological role, probable ion channel inhibitor. This is Kappa-theraphotoxin-Cg1c from Chilobrachys guangxiensis (Chinese earth tiger tarantula).